The sequence spans 141 residues: Large ribosomal subunit protein uL11c (141 aa).

Belongs to the universal ribosomal protein uL11 family. Part of the ribosomal stalk of the 50S ribosomal subunit. Interacts with L10 and the large rRNA to form the base of the stalk. L10 forms an elongated spine to which L12 dimers bind in a sequential fashion forming a multimeric L10(L12)X complex.

The protein resides in the plastid. Its subcellular location is the chloroplast. In terms of biological role, forms part of the ribosomal stalk which helps the ribosome interact with GTP-bound translation factors. The sequence is that of Large ribosomal subunit protein uL11c from Cyanidium caldarium (Red alga).